Consider the following 681-residue polypeptide: Sodium-dependent phosphate transporter 1 (681 aa).

The next 6 membrane-spanning stretches (helical) occupy residues 25–45, 66–86, 106–126, 162–182, 201–221, and 234–254; these read NLWMLILGFIIAFVLAFSVGA, ACILASIFETVGSALLGAKVS, LMAGSVSAMFGSAVWQLVASF, IVMSWFVSPLLSGIMSGILFF, ALPIFYACTIGINLFSIMYTG, and GTILISVGCAVFCALIVWFFV. The segment at 266-295 is disordered; that stretch reads VKSSPSESPLMEKKNNLKDHEETKMAPGDV. Residues serine 269 and serine 273 each carry the phosphoserine modification. Positions 275–289 are enriched in basic and acidic residues; sequence LMEKKNNLKDHEETK. Helical transmembrane passes span 513-533, 561-581, 602-622, and 652-672; these read VSLLFQFLQILTACFGSFAHG, ATPIWLLLYGGVGICMGLWVW, FSIELASAFTVVVASNIGLPI, and IFMAWFVTVPISGVISAAIMA.

It belongs to the inorganic phosphate transporter (PiT) (TC 2.A.20) family. In terms of tissue distribution, ubiquitously expressed.

The protein localises to the cell membrane. It carries out the reaction 2 Na(+)(out) + phosphate(out) = 2 Na(+)(in) + phosphate(in). In terms of biological role, sodium-phosphate symporter which preferentially transports the monovalent form of phosphate with a stoichiometry of two sodium ions per phosphate ion. May play a role in extracellular matrix and cartilage calcification as well as in vascular calcification. Essential for cell proliferation but this function is independent of its phosphate transporter activity. In Rattus norvegicus (Rat), this protein is Sodium-dependent phosphate transporter 1 (Slc20a1).